The primary structure comprises 286 residues: Formamidopyrimidine-DNA glycosylase (286 aa).

P2 serves as the catalytic Schiff-base intermediate with DNA. The active-site Proton donor is E3. The active-site Proton donor; for beta-elimination activity is the K61. H96, R115, and K161 together coordinate DNA. The FPG-type zinc-finger motif lies at 247–281; sequence EAYGREGEPCRRCGRAMRREAFMNRSSYFCPSCQR. R271 functions as the Proton donor; for delta-elimination activity in the catalytic mechanism.

This sequence belongs to the FPG family. In terms of assembly, monomer. Zn(2+) serves as cofactor.

The catalysed reaction is Hydrolysis of DNA containing ring-opened 7-methylguanine residues, releasing 2,6-diamino-4-hydroxy-5-(N-methyl)formamidopyrimidine.. It carries out the reaction 2'-deoxyribonucleotide-(2'-deoxyribose 5'-phosphate)-2'-deoxyribonucleotide-DNA = a 3'-end 2'-deoxyribonucleotide-(2,3-dehydro-2,3-deoxyribose 5'-phosphate)-DNA + a 5'-end 5'-phospho-2'-deoxyribonucleoside-DNA + H(+). Involved in base excision repair of DNA damaged by oxidation or by mutagenic agents. Acts as a DNA glycosylase that recognizes and removes damaged bases. Has a preference for oxidized purines, such as 7,8-dihydro-8-oxoguanine (8-oxoG). Has AP (apurinic/apyrimidinic) lyase activity and introduces nicks in the DNA strand. Cleaves the DNA backbone by beta-delta elimination to generate a single-strand break at the site of the removed base with both 3'- and 5'-phosphates. The protein is Formamidopyrimidine-DNA glycosylase of Mycobacteroides abscessus (strain ATCC 19977 / DSM 44196 / CCUG 20993 / CIP 104536 / JCM 13569 / NCTC 13031 / TMC 1543 / L948) (Mycobacterium abscessus).